Here is a 423-residue protein sequence, read N- to C-terminus: Large ribosomal subunit protein mL37 (423 aa).

Residues 1–29 (MALASGPARRVLARPWGLGLEGCGVPRRG) constitute a mitochondrion transit peptide.

This sequence belongs to the mitochondrion-specific ribosomal protein mL37 family. Component of the mitochondrial ribosome large subunit (39S) which comprises a 16S rRNA and about 50 distinct proteins.

Its subcellular location is the mitochondrion. The protein is Large ribosomal subunit protein mL37 (MRPL37) of Bos taurus (Bovine).